Reading from the N-terminus, the 459-residue chain is Bifunctional protein GlmU (459 aa).

Residues 1–229 are pyrophosphorylase; sequence MSNYAIILAA…FDESLGVNDR (229 aa). UDP-N-acetyl-alpha-D-glucosamine contacts are provided by residues 8–11, Lys-22, Gln-72, and 77–78; these read LAAG and GT. Asp-102 is a binding site for Mg(2+). UDP-N-acetyl-alpha-D-glucosamine-binding residues include Gly-139, Glu-154, Asn-169, and Asn-227. Residue Asn-227 participates in Mg(2+) binding. The tract at residues 230 to 250 is linker; sequence VALATAEKVMRHRIARQHMVN. Residues 251-459 are N-acetyltransferase; sequence GVTVVNPDSA…NKKPHHPSQK (209 aa). Positions 332 and 350 each coordinate UDP-N-acetyl-alpha-D-glucosamine. Catalysis depends on His-362, which acts as the Proton acceptor. UDP-N-acetyl-alpha-D-glucosamine contacts are provided by Tyr-365 and Asn-376. Residues Ala-379, 385-386, Ser-404, Ala-422, and Arg-439 each bind acetyl-CoA; that span reads NY.

In the N-terminal section; belongs to the N-acetylglucosamine-1-phosphate uridyltransferase family. The protein in the C-terminal section; belongs to the transferase hexapeptide repeat family. Homotrimer. Mg(2+) serves as cofactor.

The protein resides in the cytoplasm. It carries out the reaction alpha-D-glucosamine 1-phosphate + acetyl-CoA = N-acetyl-alpha-D-glucosamine 1-phosphate + CoA + H(+). It catalyses the reaction N-acetyl-alpha-D-glucosamine 1-phosphate + UTP + H(+) = UDP-N-acetyl-alpha-D-glucosamine + diphosphate. The protein operates within nucleotide-sugar biosynthesis; UDP-N-acetyl-alpha-D-glucosamine biosynthesis; N-acetyl-alpha-D-glucosamine 1-phosphate from alpha-D-glucosamine 6-phosphate (route II): step 2/2. It functions in the pathway nucleotide-sugar biosynthesis; UDP-N-acetyl-alpha-D-glucosamine biosynthesis; UDP-N-acetyl-alpha-D-glucosamine from N-acetyl-alpha-D-glucosamine 1-phosphate: step 1/1. Its pathway is bacterial outer membrane biogenesis; LPS lipid A biosynthesis. In terms of biological role, catalyzes the last two sequential reactions in the de novo biosynthetic pathway for UDP-N-acetylglucosamine (UDP-GlcNAc). The C-terminal domain catalyzes the transfer of acetyl group from acetyl coenzyme A to glucosamine-1-phosphate (GlcN-1-P) to produce N-acetylglucosamine-1-phosphate (GlcNAc-1-P), which is converted into UDP-GlcNAc by the transfer of uridine 5-monophosphate (from uridine 5-triphosphate), a reaction catalyzed by the N-terminal domain. This chain is Bifunctional protein GlmU, found in Streptococcus agalactiae serotype V (strain ATCC BAA-611 / 2603 V/R).